Reading from the N-terminus, the 274-residue chain is 4-hydroxy-3-methylbut-2-enyl diphosphate reductase (274 aa).

Cys-12 contributes to the [4Fe-4S] cluster binding site. Positions 36 and 70 each coordinate (2E)-4-hydroxy-3-methylbut-2-enyl diphosphate. Positions 36 and 70 each coordinate dimethylallyl diphosphate. Residues His-36 and His-70 each coordinate isopentenyl diphosphate. Position 92 (Cys-92) interacts with [4Fe-4S] cluster. His-120 contacts (2E)-4-hydroxy-3-methylbut-2-enyl diphosphate. His-120 provides a ligand contact to dimethylallyl diphosphate. His-120 lines the isopentenyl diphosphate pocket. The active-site Proton donor is Glu-122. Thr-158 serves as a coordination point for (2E)-4-hydroxy-3-methylbut-2-enyl diphosphate. Residue Cys-186 participates in [4Fe-4S] cluster binding. The (2E)-4-hydroxy-3-methylbut-2-enyl diphosphate site is built by Ser-214, Ser-215, Asn-216, and Ser-258. The dimethylallyl diphosphate site is built by Ser-214, Ser-215, Asn-216, and Ser-258. Residues Ser-214, Ser-215, Asn-216, and Ser-258 each coordinate isopentenyl diphosphate.

Belongs to the IspH family. Requires [4Fe-4S] cluster as cofactor.

The catalysed reaction is isopentenyl diphosphate + 2 oxidized [2Fe-2S]-[ferredoxin] + H2O = (2E)-4-hydroxy-3-methylbut-2-enyl diphosphate + 2 reduced [2Fe-2S]-[ferredoxin] + 2 H(+). It catalyses the reaction dimethylallyl diphosphate + 2 oxidized [2Fe-2S]-[ferredoxin] + H2O = (2E)-4-hydroxy-3-methylbut-2-enyl diphosphate + 2 reduced [2Fe-2S]-[ferredoxin] + 2 H(+). It functions in the pathway isoprenoid biosynthesis; dimethylallyl diphosphate biosynthesis; dimethylallyl diphosphate from (2E)-4-hydroxy-3-methylbutenyl diphosphate: step 1/1. It participates in isoprenoid biosynthesis; isopentenyl diphosphate biosynthesis via DXP pathway; isopentenyl diphosphate from 1-deoxy-D-xylulose 5-phosphate: step 6/6. Catalyzes the conversion of 1-hydroxy-2-methyl-2-(E)-butenyl 4-diphosphate (HMBPP) into a mixture of isopentenyl diphosphate (IPP) and dimethylallyl diphosphate (DMAPP). Acts in the terminal step of the DOXP/MEP pathway for isoprenoid precursor biosynthesis. This chain is 4-hydroxy-3-methylbut-2-enyl diphosphate reductase, found in Helicobacter pylori (strain P12).